Here is a 532-residue protein sequence, read N- to C-terminus: Phosphoenolpyruvate carboxykinase (ATP) (532 aa).

The substrate site is built by arginine 60, tyrosine 194, and lysine 200. ATP is bound by residues lysine 200, histidine 219, and 237–245; that span reads GLSGTGKTT. Mn(2+) contacts are provided by lysine 200 and histidine 219. Position 258 (aspartate 258) interacts with Mn(2+). Residues glutamate 286, arginine 324, and threonine 449 each coordinate ATP. Arginine 324 serves as a coordination point for substrate.

It belongs to the phosphoenolpyruvate carboxykinase (ATP) family. Requires Mn(2+) as cofactor.

It localises to the cytoplasm. The catalysed reaction is oxaloacetate + ATP = phosphoenolpyruvate + ADP + CO2. The protein operates within carbohydrate biosynthesis; gluconeogenesis. Its function is as follows. Involved in the gluconeogenesis. Catalyzes the conversion of oxaloacetate (OAA) to phosphoenolpyruvate (PEP) through direct phosphoryl transfer between the nucleoside triphosphate and OAA. This chain is Phosphoenolpyruvate carboxykinase (ATP), found in Paracoccus denitrificans (strain Pd 1222).